The sequence spans 404 residues: Tryptophan synthase beta chain (404 aa).

An N6-(pyridoxal phosphate)lysine modification is found at Lys91.

This sequence belongs to the TrpB family. Tetramer of two alpha and two beta chains. The cofactor is pyridoxal 5'-phosphate.

It catalyses the reaction (1S,2R)-1-C-(indol-3-yl)glycerol 3-phosphate + L-serine = D-glyceraldehyde 3-phosphate + L-tryptophan + H2O. It functions in the pathway amino-acid biosynthesis; L-tryptophan biosynthesis; L-tryptophan from chorismate: step 5/5. In terms of biological role, the beta subunit is responsible for the synthesis of L-tryptophan from indole and L-serine. The chain is Tryptophan synthase beta chain from Clavibacter michiganensis subsp. michiganensis (strain NCPPB 382).